Here is an 85-residue protein sequence, read N- to C-terminus: Insecticidal toxin Vn1 (85 aa).

The N-terminal stretch at M1–S23 is a signal peptide. C71 and C84 are disulfide-bonded.

In terms of tissue distribution, highly expressed in the venom apparatus, and weakly expressed in residual body.

The protein localises to the secreted. Functionally, endoparasitoid venom toxin that exhibits insecticidal activity against Tenebrio molitor pupae. Impacts genes related to immune response, environmental information processing, metabolism, and response to external stimuli in T.molitor, suggesting its involvement in the intricate parasitoid wasp-host interaction. The protein is Insecticidal toxin Vn1 of Aphidius gifuensis (Parasitoid wasp).